Reading from the N-terminus, the 719-residue chain is MALKDYVLEKDKVKKFLQEFYQDDESGKKQFKYGNQLVQLAHREQVAMYVDLDDIAEDDPELVDSICENTKRYARLFADAVQELLPQYKEREVVNKDVLDVYIEHRLMMEQRSRDPGAARSPQNQYPPELMRRFELYFQGPSSNKPRVIREVRADSVGKLVTVRGIVTRVSEVKPRMVVATYTCDQCGAETYQPIQSPTFMPLIMCPSQECQTNRSGGRLYLQTRGSKFIKFQEMKMQEHSDQVPVGNIPRSITVLVEGENTRIAQPGDHVSVTGIFLPILRTGFRQMVQGLLSETYLEAHRIVKMSKSEEDESGAGELTREELRQITEEDFYEKLAASIAPEIYGHEDVKKALLLLLVGGVDQSPRGMKIRGNINICLMGDPGVAKSQLLSYIDRLAPRSQYTTGRGSSGVGLTAAVLRDSVSGELTLEGGALVLADQGVCCIDEFDKMAEADRTAIHEVMEQQTISIAKAGILTTLNARCSILAAANPAYGRYNPRRSLEQNIQLPAALLSRFDLLWLIQDRPDRDNDLRLAQHITYVHQHSRQPPAQFEPLDMKLMRRYIAMCREKQPAVPESLADYITAAYVEMRREAWASKDATYTSARTLLAILRLSTALARLRMVDTVEKEDVNEAIRLMEMSKDSLLGDKGQTARTQRPADVIFATVRELVSEGQSVRFSEAEQRCISRGFTPAQFQAALDEYEELNVWQVNTARTRITFV.

Alanine 2 is modified (N-acetylalanine). Glycyl lysine isopeptide (Lys-Gly) (interchain with G-Cter in SUMO2) cross-links involve residues lysine 15 and lysine 28. A phosphoserine mark is found at serine 121 and serine 314. Residues 332–538 enclose the MCM domain; it reads FYEKLAASIA…NDLRLAQHIT (207 aa). Tyrosine 345 contacts ATP. Position 365 is a phosphoserine (serine 365). Glycine 384, alanine 386, lysine 387, serine 388, and asparagine 489 together coordinate ATP. Residue serine 500 is modified to Phosphoserine. The Arginine finger motif lies at 513 to 516; sequence SRFD. Arginine 514 is a binding site for ATP. Residues 521–564 form an interaction with RAD17 region; it reads IQDRPDRDNDLRLAQHITYVHQHSRQPPAQFEPLDMKLMRRYIA. The interval 577–719 is interaction with ATRIP; that stretch reads LADYITAAYV…NTARTRITFV (143 aa). Arginine 604 is a binding site for ATP. The residue at position 678 (serine 678) is a Phosphoserine.

The protein belongs to the MCM family. Component of the MCM2-7 complex. The complex forms a toroidal hexameric ring with the proposed subunit order MCM2-MCM6-MCM4-MCM7-MCM3-MCM5. Component of the CMG helicase complex, a hexameric ring of related MCM2-7 subunits stabilized by CDC45 and the tetrameric GINS complex. Interacts with the ATR-ATRIP complex and with RAD17. Interacts with TIPIN. Interacts with MCMBP. Interacts with ANKRD17. Component of the replisome complex composed of at least DONSON, MCM2, MCM7, PCNA and TICRR. O-glycosylated (O-GlcNAcylated), in a cell cycle-dependent manner. In terms of processing, ubiquitinated by ECS(LRR1) E3 ubiquitin-protein ligase complex when forks converge following formation of DNA interstrand cross-links. During mitosis, ubiquitinated by TRAIP when forks converge following formation of DNA interstrand cross-links. Short ubiquitin chains on MCM7 promote recruitment of DNA glycosylase NEIL3. If the interstrand cross-link cannot be cleaved by NEIL3, the ubiquitin chains continue to grow on MCM7, promoting the unloading of the CMG helicase complex by the VCP/p97 ATPase.

It is found in the nucleus. The protein resides in the chromosome. The catalysed reaction is ATP + H2O = ADP + phosphate + H(+). Its function is as follows. Acts as a component of the MCM2-7 complex (MCM complex) which is the replicative helicase essential for 'once per cell cycle' DNA replication initiation and elongation in eukaryotic cells. Core component of CDC45-MCM-GINS (CMG) helicase, the molecular machine that unwinds template DNA during replication, and around which the replisome is built. The active ATPase sites in the MCM2-7 ring are formed through the interaction surfaces of two neighboring subunits such that a critical structure of a conserved arginine finger motif is provided in trans relative to the ATP-binding site of the Walker A box of the adjacent subunit. The six ATPase active sites, however, are likely to contribute differentially to the complex helicase activity. Required for S-phase checkpoint activation upon UV-induced damage. The chain is DNA replication licensing factor MCM7 (MCM7) from Bos taurus (Bovine).